Consider the following 256-residue polypeptide: Ubiquinone/menaquinone biosynthesis C-methyltransferase UbiE (256 aa).

Basic and acidic residues predominate over residues 1–12; it reads MNDQRKGEHAEP. The tract at residues 1–21 is disordered; sequence MNDQRKGEHAEPTTHFGYQDV. S-adenosyl-L-methionine-binding positions include Thr-79, Asp-100, and 128-129; that span reads DA.

The protein belongs to the class I-like SAM-binding methyltransferase superfamily. MenG/UbiE family.

The enzyme catalyses a 2-demethylmenaquinol + S-adenosyl-L-methionine = a menaquinol + S-adenosyl-L-homocysteine + H(+). It carries out the reaction a 2-methoxy-6-(all-trans-polyprenyl)benzene-1,4-diol + S-adenosyl-L-methionine = a 5-methoxy-2-methyl-3-(all-trans-polyprenyl)benzene-1,4-diol + S-adenosyl-L-homocysteine + H(+). Its pathway is quinol/quinone metabolism; menaquinone biosynthesis; menaquinol from 1,4-dihydroxy-2-naphthoate: step 2/2. It participates in cofactor biosynthesis; ubiquinone biosynthesis. Methyltransferase required for the conversion of demethylmenaquinol (DMKH2) to menaquinol (MKH2) and the conversion of 2-polyprenyl-6-methoxy-1,4-benzoquinol (DDMQH2) to 2-polyprenyl-3-methyl-6-methoxy-1,4-benzoquinol (DMQH2). This Pseudomonas putida (strain W619) protein is Ubiquinone/menaquinone biosynthesis C-methyltransferase UbiE.